The chain runs to 351 residues: Quinolinate phosphoribosyltransferase [decarboxylating] 2, mitochondrial (351 aa).

Substrate contacts are provided by residues Arg-142, Thr-173–Lys-175, Arg-197, Lys-207, Glu-240, Asp-267, Ser-299–Asn-301, and Ser-320–Ala-322.

It belongs to the NadC/ModD family.

It localises to the mitochondrion. It catalyses the reaction nicotinate beta-D-ribonucleotide + CO2 + diphosphate = quinolinate + 5-phospho-alpha-D-ribose 1-diphosphate + 2 H(+). It functions in the pathway alkaloid biosynthesis; nicotine biosynthesis. The protein operates within cofactor biosynthesis; NAD(+) biosynthesis; nicotinate D-ribonucleotide from quinolinate: step 1/1. In terms of biological role, involved in the biosynthesis of pyridine alkaloid natural products, leading mainly to the production of anabasine, anatabine, nicotine and nornicotine, effective deterrents against herbivores with antiparasitic and pesticide properties (neurotoxins); nornicotine serves as the precursor in the synthesis of the carcinogen compound N'-nitrosonornicotine (NNN). Involved in the catabolism of quinolinic acid (QA). In Nicotiana glauca (Glaucous tobacco), this protein is Quinolinate phosphoribosyltransferase [decarboxylating] 2, mitochondrial.